A 293-amino-acid chain; its full sequence is uncharacterized protein (293 aa).

Disordered regions lie at residues 20–148 (ELHS…NNNT) and 226–283 (RENQ…GNKN). Acidic residues-rich tracts occupy residues 37 to 47 (LEDDEEYDDDQ), 56 to 91 (EEFD…DDEM), and 99 to 112 (NIDD…EEEQ). Low complexity-rich tracts occupy residues 117-148 (TNNN…NNNT) and 232-283 (NSNS…GNKN).

This is an uncharacterized protein from Dictyostelium discoideum (Social amoeba).